The primary structure comprises 337 residues: Phosphate acyltransferase (337 aa).

Belongs to the PlsX family. Homodimer. Probably interacts with PlsY.

The protein resides in the cytoplasm. It catalyses the reaction a fatty acyl-[ACP] + phosphate = an acyl phosphate + holo-[ACP]. Its pathway is lipid metabolism; phospholipid metabolism. In terms of biological role, catalyzes the reversible formation of acyl-phosphate (acyl-PO(4)) from acyl-[acyl-carrier-protein] (acyl-ACP). This enzyme utilizes acyl-ACP as fatty acyl donor, but not acyl-CoA. The polypeptide is Phosphate acyltransferase (Ehrlichia canis (strain Jake)).